A 184-amino-acid chain; its full sequence is Type-1 fimbrial protein, A chain (184 aa).

A signal peptide spans 1–23; sequence MKIKTLAIVVLSALSLSSTAALA. Cys46 and Cys86 are joined by a disulfide.

This sequence belongs to the fimbrial protein family.

It localises to the fimbrium. In terms of biological role, fimbriae (also called pili), polar filaments radiating from the surface of the bacterium to a length of 0.5-1.5 micrometers and numbering 100-300 per cell, enable bacteria to colonize the epithelium of specific host organs. The sequence is that of Type-1 fimbrial protein, A chain from Escherichia coli.